The chain runs to 82 residues: Sec-independent protein translocase protein TatA (82 aa).

The chain crosses the membrane as a helical span at residues 1 to 21 (MGGISIWQLLIIAVIIVLLFG). The tract at residues 48–82 (PAKEAKKDADFVPQNLEKKEAETVEKQKQNDKEQA) is disordered.

It belongs to the TatA/E family. The Tat system comprises two distinct complexes: a TatABC complex, containing multiple copies of TatA, TatB and TatC subunits, and a separate TatA complex, containing only TatA subunits. Substrates initially bind to the TatABC complex, which probably triggers association of the separate TatA complex to form the active translocon.

The protein localises to the cell inner membrane. Part of the twin-arginine translocation (Tat) system that transports large folded proteins containing a characteristic twin-arginine motif in their signal peptide across membranes. TatA could form the protein-conducting channel of the Tat system. The polypeptide is Sec-independent protein translocase protein TatA (Aliivibrio fischeri (strain ATCC 700601 / ES114) (Vibrio fischeri)).